A 738-amino-acid polypeptide reads, in one-letter code: Protein Aster-B (738 aa).

Positions 1-81 are disordered; the sequence is MKGFKLSCTA…SGGKNSKKSQ (81 aa). Residues 8 to 19 show a composition bias toward polar residues; the sequence is CTASNSNRSTPA. 2 positions are modified to phosphoserine: S28 and S30. The span at 41–51 shows a compositional bias: basic and acidic residues; sequence MVEKGSDHSSD. The segment covering 59 to 70 has biased composition (low complexity); the sequence is QGVQRSCSSQSG. The GRAM domain maps to 96–163; that stretch reads EDFRKLFKQL…KDICSMTKEK (68 aa). Residues 254–299 form a disordered region; sequence EENEVNDSSSKSSIETKPDASPQLPKKSITNSTLTSTGSSEAPVSF. Over residues 259 to 268 the composition is skewed to polar residues; that stretch reads NDSSSKSSIE. At S274 the chain carries Phosphoserine. The segment covering 281–295 has biased composition (polar residues); it reads SITNSTLTSTGSSEA. One can recognise a VASt domain in the interval 372 to 543; that stretch reads SGRQYVNEVF…ELTKTESTYL (172 aa). Y389 is modified (phosphotyrosine). A phosphoserine mark is found at S550 and S581. Phosphothreonine occurs at positions 584, 585, and 587. Residues 623 to 643 form a helical membrane-spanning segment; that stretch reads LLLVISCVICFSLVLLVVLNM.

Highly expressed in the adrenal gland (at protein level) and brain. Also found in the kidney, testis and macrophages.

It localises to the endoplasmic reticulum membrane. Its subcellular location is the cell membrane. Its function is as follows. Cholesterol transporter that mediates non-vesicular transport of cholesterol from the plasma membrane (PM) to the endoplasmic reticulum (ER). Contains unique domains for binding cholesterol and the PM, thereby serving as a molecular bridge for the transfer of cholesterol from the PM to the ER. Plays a crucial role in cholesterol homeostasis in the adrenal gland and has the unique ability to localize to the PM based on the level of membrane cholesterol. In lipid-poor conditions localizes to the ER membrane and in response to excess cholesterol in the PM is recruited to the endoplasmic reticulum-plasma membrane contact sites (EPCS) which is mediated by the GRAM domain. At the EPCS, the sterol-binding VASt/ASTER domain binds to the cholesterol in the PM and facilitates its transfer from the PM to ER. The protein is Protein Aster-B (Gramd1b) of Mus musculus (Mouse).